A 335-amino-acid chain; its full sequence is 2-acylglycerol O-acyltransferase 2 (335 aa).

2 consecutive transmembrane segments (helical) span residues 24 to 44 and 104 to 124; these read WAVS…LLLF and YIMG…NFCT. Asn206 is a glycosylation site (N-linked (GlcNAc...) asparagine).

This sequence belongs to the diacylglycerol acyltransferase family.

The protein resides in the endoplasmic reticulum membrane. The protein localises to the cytoplasm. It is found in the perinuclear region. The catalysed reaction is a 2-acylglycerol + an acyl-CoA = a 1,2-diacylglycerol + CoA. It catalyses the reaction a 2-acylglycerol + an acyl-CoA = a 1,2-diacyl-sn-glycerol + CoA. It carries out the reaction a 2-acylglycerol + an acyl-CoA = a 2,3-diacyl-sn-glycerol + CoA. The enzyme catalyses a 1-acylglycerol + an acyl-CoA = a 1,2-diacylglycerol + CoA. The catalysed reaction is a 1-acylglycerol + an acyl-CoA = a 1,3-diacylglycerol + CoA. It catalyses the reaction 1-O-alkylglycerol + an acyl-CoA = 1-O-alkyl-3-acylglycerol + CoA. It carries out the reaction an acyl-CoA + a 1,2-diacyl-sn-glycerol = a triacyl-sn-glycerol + CoA. It participates in glycerolipid metabolism; triacylglycerol biosynthesis. Functionally, involved in glycerolipid synthesis and lipid metabolism. Catalyzes the formation of diacylglycerol, the precursor of triacylglycerol, by transferring the acyl chain of a fatty acyl-CoA to a monoacylglycerol. Plays a central role in absorption of dietary fat in the small intestine by catalyzing the resynthesis of triacylglycerol in enterocytes. Has a preference toward monoacylglycerols containing unsaturated fatty acids in an order of C18:3 &gt; C18:2 &gt; C18:1 &gt; C18:0 at sn-2. Able to use 1-monoalkylglycerol (1-MAkG, 1-O-alkylglycerol) as an acyl acceptor for the synthesis of monoalkyl-monoacylglycerol (MAMAG, 1-O-alkyl-3-acylglycerol or 1-O-alkyl-2-acylglycerol) and subsequently, with lower efficiency, may add another acyl chain producing monoalkyl-diacylglycerol (MADAG, 1-O-alkyl-2,3-diacylglycerol). Possesses weak but significant activity with diacylglycerol as substrate, producing triacylglycerol (triacyl-sn-glycerol). The sequence is that of 2-acylglycerol O-acyltransferase 2 (mogat2) from Xenopus tropicalis (Western clawed frog).